We begin with the raw amino-acid sequence, 273 residues long: 4-hydroxy-tetrahydrodipicolinate reductase (273 aa).

NAD(+)-binding positions include 8 to 13, aspartate 35, 103 to 105, and 129 to 132; these read GALGRM, GTT, and SQNY. Histidine 161 acts as the Proton donor/acceptor in catalysis. Position 162 (histidine 162) interacts with (S)-2,3,4,5-tetrahydrodipicolinate. Catalysis depends on lysine 165, which acts as the Proton donor. A (S)-2,3,4,5-tetrahydrodipicolinate-binding site is contributed by 171–172; sequence GT.

Belongs to the DapB family.

Its subcellular location is the cytoplasm. It catalyses the reaction (S)-2,3,4,5-tetrahydrodipicolinate + NAD(+) + H2O = (2S,4S)-4-hydroxy-2,3,4,5-tetrahydrodipicolinate + NADH + H(+). The catalysed reaction is (S)-2,3,4,5-tetrahydrodipicolinate + NADP(+) + H2O = (2S,4S)-4-hydroxy-2,3,4,5-tetrahydrodipicolinate + NADPH + H(+). The protein operates within amino-acid biosynthesis; L-lysine biosynthesis via DAP pathway; (S)-tetrahydrodipicolinate from L-aspartate: step 4/4. Its function is as follows. Catalyzes the conversion of 4-hydroxy-tetrahydrodipicolinate (HTPA) to tetrahydrodipicolinate. The sequence is that of 4-hydroxy-tetrahydrodipicolinate reductase from Methanococcus aeolicus (strain ATCC BAA-1280 / DSM 17508 / OCM 812 / Nankai-3).